Here is a 333-residue protein sequence, read N- to C-terminus: Adenosine deaminase (333 aa).

Zn(2+)-binding residues include His-12 and His-14. The substrate site is built by His-14, Asp-16, and Gly-170. His-197 is a binding site for Zn(2+). Glu-200 (proton donor) is an active-site residue. Asp-278 lines the Zn(2+) pocket. Substrate is bound at residue Asp-279.

It belongs to the metallo-dependent hydrolases superfamily. Adenosine and AMP deaminases family. Adenosine deaminase subfamily. Zn(2+) is required as a cofactor.

It catalyses the reaction adenosine + H2O + H(+) = inosine + NH4(+). The catalysed reaction is 2'-deoxyadenosine + H2O + H(+) = 2'-deoxyinosine + NH4(+). Functionally, catalyzes the hydrolytic deamination of adenosine and 2-deoxyadenosine. The protein is Adenosine deaminase of Salmonella gallinarum (strain 287/91 / NCTC 13346).